A 718-amino-acid chain; its full sequence is Polyribonucleotide nucleotidyltransferase (718 aa).

Residues aspartate 487 and aspartate 493 each coordinate Mg(2+). The region spanning 554–613 (PRIETFKIPTDKIREVIGTGGKVIREIVEKTGAKVNIEDDGTVKVASSDGESIKAAIKWI) is the KH domain. In terms of domain architecture, S1 motif spans 623 to 691 (GEIYEGTVVK…DRGKTRLSMK (69 aa)). The segment at 692–718 (VVDQETGEDLEAKQKAEGDAPREAAGE) is disordered. Residues 701-718 (LEAKQKAEGDAPREAAGE) show a composition bias toward basic and acidic residues.

The protein belongs to the polyribonucleotide nucleotidyltransferase family. Mg(2+) is required as a cofactor.

It is found in the cytoplasm. The catalysed reaction is RNA(n+1) + phosphate = RNA(n) + a ribonucleoside 5'-diphosphate. Its function is as follows. Involved in mRNA degradation. Catalyzes the phosphorolysis of single-stranded polyribonucleotides processively in the 3'- to 5'-direction. This chain is Polyribonucleotide nucleotidyltransferase, found in Nitrobacter winogradskyi (strain ATCC 25391 / DSM 10237 / CIP 104748 / NCIMB 11846 / Nb-255).